The sequence spans 210 residues: WASH complex subunit 3 (210 aa).

The stretch at 49–73 (EEKLASISLRIQQIETTLSILEAKL) forms a coiled coil. The segment at 173–210 (LDPNLLDTPDAPVPDAVKKNTLDQDDDSDDGSESSFSD) is disordered. A compositionally biased stretch (acidic residues) spans 195-204 (DQDDDSDDGS).

It belongs to the CCDC53 family. In terms of assembly, component of the WASH complex.

The chain is WASH complex subunit 3 from Salmo salar (Atlantic salmon).